We begin with the raw amino-acid sequence, 549 residues long: Glucose-6-phosphate isomerase (549 aa).

Glu352 (proton donor) is an active-site residue. Catalysis depends on residues His383 and Lys511.

This sequence belongs to the GPI family.

Its subcellular location is the cytoplasm. It catalyses the reaction alpha-D-glucose 6-phosphate = beta-D-fructose 6-phosphate. Its pathway is carbohydrate biosynthesis; gluconeogenesis. It participates in carbohydrate degradation; glycolysis; D-glyceraldehyde 3-phosphate and glycerone phosphate from D-glucose: step 2/4. Functionally, catalyzes the reversible isomerization of glucose-6-phosphate to fructose-6-phosphate. The chain is Glucose-6-phosphate isomerase from Methylocella silvestris (strain DSM 15510 / CIP 108128 / LMG 27833 / NCIMB 13906 / BL2).